The sequence spans 314 residues: Dihydropteroate synthase (314 aa).

In terms of domain architecture, Pterin-binding spans 10-294 (TVICGIINVT…DVASHRMAVE (285 aa)). Residue asparagine 17 coordinates Mg(2+). (7,8-dihydropterin-6-yl)methyl diphosphate-binding positions include threonine 57, aspartate 91, asparagine 110, aspartate 201, lysine 237, and 282-284 (RVH).

It belongs to the DHPS family. Homodimer or homotrimer. Mg(2+) is required as a cofactor.

The catalysed reaction is (7,8-dihydropterin-6-yl)methyl diphosphate + 4-aminobenzoate = 7,8-dihydropteroate + diphosphate. It participates in cofactor biosynthesis; tetrahydrofolate biosynthesis; 7,8-dihydrofolate from 2-amino-4-hydroxy-6-hydroxymethyl-7,8-dihydropteridine diphosphate and 4-aminobenzoate: step 1/2. Its function is as follows. Catalyzes the condensation of para-aminobenzoate (pABA) with 6-hydroxymethyl-7,8-dihydropterin diphosphate (DHPt-PP) to form 7,8-dihydropteroate (H2Pte), the immediate precursor of folate derivatives. In Streptococcus pneumoniae serotype 4 (strain ATCC BAA-334 / TIGR4), this protein is Dihydropteroate synthase (sulA).